A 308-amino-acid chain; its full sequence is Isoaspartyl peptidase/L-asparaginase (308 aa).

An N-acetylmethionine modification is found at Met-1. The active-site Nucleophile is the Thr-168. Residues Arg-196–Asp-199 and Thr-219–Gly-222 each bind substrate.

This sequence belongs to the Ntn-hydrolase family. Heterodimer of an alpha and beta chain produced by autocleavage. This heterodimer may then dimerize in turn, giving rise to a heterotetramer. In terms of processing, cleaved into an alpha and beta chain by autocatalysis; this activates the enzyme. The N-terminal residue of the beta subunit is responsible for the nucleophile hydrolase activity.

The protein resides in the cytoplasm. The catalysed reaction is L-asparagine + H2O = L-aspartate + NH4(+). It carries out the reaction Cleavage of a beta-linked Asp residue from the N-terminus of a polypeptide.. Has both L-asparaginase and beta-aspartyl peptidase activity. May be involved in the production of L-aspartate, which can act as an excitatory neurotransmitter in some brain regions. Is highly active with L-Asp beta-methyl ester. Besides, has catalytic activity toward beta-aspartyl dipeptides and their methyl esters, including beta-L-Asp-L-Phe, beta-L-Asp-L-Phe methyl ester (aspartame), beta-L-Asp-L-Ala, beta-L-Asp-L-Leu and beta-L-Asp-L-Lys. Does not have aspartylglucosaminidase activity and is inactive toward GlcNAc-L-Asn. Likewise, has no activity toward glutamine. This chain is Isoaspartyl peptidase/L-asparaginase (ASRGL1), found in Macaca fascicularis (Crab-eating macaque).